Here is a 113-residue protein sequence, read N- to C-terminus: Putative increased recombination centers protein 14 (113 aa).

In Saccharomyces cerevisiae (strain ATCC 204508 / S288c) (Baker's yeast), this protein is Putative increased recombination centers protein 14 (IRC14).